The primary structure comprises 144 residues: Gas vesicle protein A1 (144 aa).

The disordered stretch occupies residues 72 to 144 (EAGPRKDPGL…APSRRKEEQE (73 aa)). Basic and acidic residues predominate over residues 113 to 127 (KQARDDGGSERETSS).

It belongs to the gas vesicle GvpA family. The gas vesicle shell is 2 nm thick and consists of a single layer of this protein. It forms helical ribs nearly perpendicular to the long axis of the vesicle.

Its subcellular location is the gas vesicle shell. Functionally, gas vesicles are hollow, gas filled proteinaceous nanostructures found in some microorganisms. During planktonic growth they allow positioning of the organism at a favorable depth for light or nutrient acquisition. GvpA forms the protein shell. It is not clear what function GVs perform in soil bacteria. This is Gas vesicle protein A1 from Streptomyces coelicolor (strain ATCC BAA-471 / A3(2) / M145).